Consider the following 472-residue polypeptide: Cysteine--tRNA ligase (472 aa).

Position 29 (Cys29) interacts with Zn(2+). Positions 31-41 match the 'HIGH' region motif; that stretch reads PTVYDFAHIGN. 3 residues coordinate Zn(2+): Cys227, His252, and Glu256. Residues 285–289 carry the 'KMSKS' region motif; the sequence is KMSKS. Lys288 is a binding site for ATP.

Belongs to the class-I aminoacyl-tRNA synthetase family. Monomer. The cofactor is Zn(2+).

The protein resides in the cytoplasm. The enzyme catalyses tRNA(Cys) + L-cysteine + ATP = L-cysteinyl-tRNA(Cys) + AMP + diphosphate. The protein is Cysteine--tRNA ligase of Bradyrhizobium sp. (strain BTAi1 / ATCC BAA-1182).